The primary structure comprises 380 residues: MRFFTQSPFPLRTLTRRLTAFVCVGLLLLPGFTLAASVRIKDITDMEGVRSNQLIGYGLVVGLNGTGDRLTNTIFTRETLISMLNRLGVNIRDQETQLQTHDVAAVMVTADLPAFVHGGNRIDVTVSAAGDASSLTGGTLLVTPLMAADGEVYAVAQGSLATNAFSARGAAASITRNVPTSGHIANGGIVEREVPFDLSHRANLHLSLRNPDFTTASRIASIINRTFGPIAIVQDPRTVLLDLSNHDPVSTLSRIGDLLVTPDTPAKVVVDEASGTIIMGADVRISTVAVAQGNLTVQVTETPQVSQPGPFSGGQTAVVPRTNVKVDTGKTHHLAVVPGGTTLRELVSGLNALGVGPRDMISILQAIKADGALQAELEMR.

A signal peptide spans 1-35 (MRFFTQSPFPLRTLTRRLTAFVCVGLLLLPGFTLA).

This sequence belongs to the FlgI family. As to quaternary structure, the basal body constitutes a major portion of the flagellar organelle and consists of four rings (L,P,S, and M) mounted on a central rod.

It is found in the periplasm. It localises to the bacterial flagellum basal body. Its function is as follows. Assembles around the rod to form the L-ring and probably protects the motor/basal body from shearing forces during rotation. The chain is Flagellar P-ring protein from Gluconobacter oxydans (strain 621H) (Gluconobacter suboxydans).